The primary structure comprises 490 residues: Aspartyl/glutamyl-tRNA(Asn/Gln) amidotransferase subunit B (490 aa).

Belongs to the GatB/GatE family. GatB subfamily. In terms of assembly, heterotrimer of A, B and C subunits.

The catalysed reaction is L-glutamyl-tRNA(Gln) + L-glutamine + ATP + H2O = L-glutaminyl-tRNA(Gln) + L-glutamate + ADP + phosphate + H(+). It carries out the reaction L-aspartyl-tRNA(Asn) + L-glutamine + ATP + H2O = L-asparaginyl-tRNA(Asn) + L-glutamate + ADP + phosphate + 2 H(+). In terms of biological role, allows the formation of correctly charged Asn-tRNA(Asn) or Gln-tRNA(Gln) through the transamidation of misacylated Asp-tRNA(Asn) or Glu-tRNA(Gln) in organisms which lack either or both of asparaginyl-tRNA or glutaminyl-tRNA synthetases. The reaction takes place in the presence of glutamine and ATP through an activated phospho-Asp-tRNA(Asn) or phospho-Glu-tRNA(Gln). This is Aspartyl/glutamyl-tRNA(Asn/Gln) amidotransferase subunit B from Methylobacterium sp. (strain 4-46).